The sequence spans 130 residues: Small ribosomal subunit protein uS8 (130 aa).

This sequence belongs to the universal ribosomal protein uS8 family. In terms of assembly, part of the 30S ribosomal subunit. Contacts proteins S5 and S12.

Functionally, one of the primary rRNA binding proteins, it binds directly to 16S rRNA central domain where it helps coordinate assembly of the platform of the 30S subunit. In Coxiella burnetii (strain RSA 331 / Henzerling II), this protein is Small ribosomal subunit protein uS8.